A 407-amino-acid polypeptide reads, in one-letter code: MVLRVAVVGGGPAGSSAAEILVKAGIETYLFERKLDNAKPCGGAIPLCMVDEFDLPPEIIDRRVRKMKMISPSNIEVNIGQTLKDDEYIGMCRREVLDGFLRERAEKLGTKVINGTVYKLDIPSKDSDPYTLHYADHSVGGTTGEMKILKVDVVIGADGANSRIAKAIDAGDYNYAIAFQERIRLPEDKMAYYDELAEMYVGDDVSPDFYAWVFPKYDHVAVGTGTMKVNKARIKDLQAGIRTRAAKKLEGGEIIKVEAHPIPEHPRPRRVVGRVALVGDAAGTVTKSSGEGIYFAAKSARMCAETIVATSNNGQRVPTEADLKQYIKQWDKRYGATYLVLDILQRVFYRTDATREAFVEMCSDIDVQKLTFDSYLYKTVVPANPLVQMKITAKTIGSLLRGNALAP.

It belongs to the geranylgeranyl reductase family. ChlP subfamily.

The catalysed reaction is phytyl diphosphate + 3 NADP(+) = geranylgeranyl diphosphate + 3 NADPH + 3 H(+). It functions in the pathway porphyrin-containing compound metabolism; chlorophyll biosynthesis. In terms of biological role, catalyzes the stepwise hydrogenation of geranylgeraniol to phytol during chlorophyll A (ChlA) biosynthesis. The sequence is that of Geranylgeranyl diphosphate reductase (chlP) from Synechocystis sp. (strain ATCC 27184 / PCC 6803 / Kazusa).